Consider the following 312-residue polypeptide: MGKPLISILGPTGVGKTDLAFRLACSLDKANILSVDTGSFYKAATIGTAKPPKEFTSRVRHWFIDILECQEVYSVGAFVSDCSSILQDLWAEGVTPIVVAGTLFYYYALVGERSFSAVPSDSTVREKVEEKARVYGEEYLRQELRKVDPEREKNILPGDIRRLTRALEIAELGFKPTEAVVTNKLDFDINLKIGLKMPRDLYRTRLRDRVEYMISAGLIEEVQDILSKTGNSSLPCLNQIGYKEVCSYLKGEIKNKDELVERIFLSHWTYARKQIKWLKKDKTIVWFDVSEKSPDTLVEEVLTLVQSTLENC.

Residue 10 to 17 (GPTGVGKT) participates in ATP binding. 12–17 (TGVGKT) contributes to the substrate binding site.

This sequence belongs to the IPP transferase family. As to quaternary structure, monomer. Mg(2+) is required as a cofactor.

It catalyses the reaction adenosine(37) in tRNA + dimethylallyl diphosphate = N(6)-dimethylallyladenosine(37) in tRNA + diphosphate. Its function is as follows. Catalyzes the transfer of a dimethylallyl group onto the adenine at position 37 in tRNAs that read codons beginning with uridine, leading to the formation of N6-(dimethylallyl)adenosine (i(6)A). This chain is tRNA dimethylallyltransferase, found in Coprothermobacter proteolyticus (strain ATCC 35245 / DSM 5265 / OCM 4 / BT).